A 672-amino-acid chain; its full sequence is Spermatid perinuclear RNA-binding protein (672 aa).

Positions R5–L363 constitute a DZF domain. Disordered stretches follow at residues T52–Y73 and G349–K371. Basic and acidic residues predominate over residues R357–K371. The 67-residue stretch at D387–Y453 folds into the DRBM 1 domain. Basic and acidic residues predominate over residues S466–N476. The disordered stretch occupies residues S466 to E499. A compositionally biased stretch (low complexity) spans E477–T497. Residues S510 to S576 form the DRBM 2 domain. 2 positions are modified to asymmetric dimethylarginine: R612 and R617.

As to quaternary structure, interacts with EIF2AK2. Associates with microtubules; it is unsure whether such interaction is direct or indirect.

The protein resides in the cytoplasm. Its function is as follows. Involved in spermatogenesis and sperm function. Plays a role in regulation of cell growth. Binds to double-stranded DNA and RNA. Binds most efficiently to poly(I:C) RNA than to poly(dI:dC) DNA. Binds also to single-stranded poly(G) RNA. Binds non-specifically to the mRNA PRM1 3'-UTR and adenovirus VA RNA. The polypeptide is Spermatid perinuclear RNA-binding protein (STRBP) (Pongo abelii (Sumatran orangutan)).